A 469-amino-acid polypeptide reads, in one-letter code: UDP-N-acetylmuramate--L-alanine ligase (469 aa).

Residue 119–125 (GTHGKTT) participates in ATP binding.

Belongs to the MurCDEF family.

It is found in the cytoplasm. The enzyme catalyses UDP-N-acetyl-alpha-D-muramate + L-alanine + ATP = UDP-N-acetyl-alpha-D-muramoyl-L-alanine + ADP + phosphate + H(+). The protein operates within cell wall biogenesis; peptidoglycan biosynthesis. Functionally, cell wall formation. This is UDP-N-acetylmuramate--L-alanine ligase from Vesicomyosocius okutanii subsp. Calyptogena okutanii (strain HA).